We begin with the raw amino-acid sequence, 224 residues long: 7-cyano-7-deazaguanine synthase (224 aa).

8-18 (LSGGMDSAAVI) contributes to the ATP binding site. The Zn(2+) site is built by C186, C196, C199, and C202.

Belongs to the QueC family. Zn(2+) is required as a cofactor.

The catalysed reaction is 7-carboxy-7-deazaguanine + NH4(+) + ATP = 7-cyano-7-deazaguanine + ADP + phosphate + H2O + H(+). The protein operates within purine metabolism; 7-cyano-7-deazaguanine biosynthesis. In terms of biological role, catalyzes the ATP-dependent conversion of 7-carboxy-7-deazaguanine (CDG) to 7-cyano-7-deazaguanine (preQ(0)). The protein is 7-cyano-7-deazaguanine synthase of Xanthomonas campestris pv. campestris (strain 8004).